A 553-amino-acid chain; its full sequence is Methyl-coenzyme M reductase II subunit alpha (553 aa).

Glutamine 150 is a binding site for coenzyme F430. Coenzyme B is bound by residues arginine 228, 259–260 (KH), and arginine 273. Histidine 260 carries the post-translational modification Pros-methylhistidine. The residue at position 274 (arginine 274) is a 5-methylarginine. Tyrosine 335 is a binding site for coenzyme M. Glutamine 402 bears the 2-methylglutamine mark. Tyrosine 446 contacts coenzyme M. The residue at position 447 (glycine 447) is a 1-thioglycine. Aspartate 452 bears the (Z)-2,3-didehydroaspartate mark. Cysteine 454 carries the post-translational modification S-methylcysteine.

It belongs to the methyl-coenzyme M reductase alpha subunit family. In terms of assembly, MCR is a hexamer of two alpha, two beta, and two gamma chains, forming a dimer of heterotrimers. Coenzyme F430 is required as a cofactor. The alpha subunit contains six modified amino acids near the active site region. Is methylated on His-260, Arg-274, Gln-402 and Cys-454, probably by the action of specific S-adenosylmethionine-dependent methyltransferases. Also contains a thioglycine at position 447, forming a thiopeptide bond. Contains a didehydroaspartate residue at position 452. The methylation on C5 of Arg-274 is a post-translational methylation not essential in vivo, but which plays a role for the stability and structural integrity of MCR.

The enzyme catalyses coenzyme B + methyl-coenzyme M = methane + coenzyme M-coenzyme B heterodisulfide. It participates in one-carbon metabolism; methyl-coenzyme M reduction; methane from methyl-coenzyme M: step 1/1. Functionally, component of the methyl-coenzyme M reductase (MCR) I that catalyzes the reductive cleavage of methyl-coenzyme M (CoM-S-CH3 or 2-(methylthio)ethanesulfonate) using coenzyme B (CoB or 7-mercaptoheptanoylthreonine phosphate) as reductant which results in the production of methane and the mixed heterodisulfide of CoB and CoM (CoM-S-S-CoB). This is the final step in methanogenesis. The sequence is that of Methyl-coenzyme M reductase II subunit alpha (mrtA) from Methanothermobacter thermautotrophicus (strain ATCC 29096 / DSM 1053 / JCM 10044 / NBRC 100330 / Delta H) (Methanobacterium thermoautotrophicum).